Consider the following 473-residue polypeptide: Serine palmitoyltransferase 1 (473 aa).

The Lumenal segment spans residues 1 to 15; it reads MAMAAEQWVLVEMVQ. The interaction with SPTLC2 stretch occupies residues 1–66; sequence MAMAAEQWVL…KEELIEEWQP (66 aa). The helical transmembrane segment at 16–36 threads the bilayer; that stretch reads ALYEAPAYHLILEGILILWII. Topologically, residues 37–473 are cytoplasmic; the sequence is RLVFSKTYKL…IREAAQAVLL (437 aa). Tyrosine 164 is subject to Phosphotyrosine; by ABL.

Belongs to the class-II pyridoxal-phosphate-dependent aminotransferase family. Component of the serine palmitoyltransferase (SPT) complex, which is also composed of SPTLC2 or SPTLC3 and SPTSSA or SPTSSB. The heterodimer with SPTLC2 or SPTLC3 forms the catalytic core of the enzyme, while SPTSSA or SPTSSB subunits determine substrate specificity. SPT also interacts with ORMDL proteins, especially ORMDL3, which negatively regulate SPT activity in the presence of ceramides. Forms dimers of heterodimers with SPTLC2. Interacts with RTN4. Pyridoxal 5'-phosphate serves as cofactor. In terms of processing, phosphorylation at Tyr-164 inhibits activity and promotes cell survival.

The protein localises to the endoplasmic reticulum membrane. The enzyme catalyses L-serine + hexadecanoyl-CoA + H(+) = 3-oxosphinganine + CO2 + CoA. It catalyses the reaction octadecanoyl-CoA + L-serine + H(+) = 3-oxoeicosasphinganine + CO2 + CoA. It carries out the reaction tetradecanoyl-CoA + L-serine + H(+) = 3-oxohexadecasphinganine + CO2 + CoA. The catalysed reaction is dodecanoyl-CoA + L-serine + H(+) = 3-oxotetradecasphinganine + CO2 + CoA. It participates in lipid metabolism; sphingolipid metabolism. SPT complex catalytic activity is negatively regulated by ORMDL proteins, including ORMDL3, in the presence of ceramides. This mechanism allows to maintain ceramide levels at sufficient concentrations for the production of complex sphingolipids, but which prevents the accumulation of ceramides to levels that trigger apoptosis. In terms of biological role, component of the serine palmitoyltransferase multisubunit enzyme (SPT) that catalyzes the initial and rate-limiting step in sphingolipid biosynthesis by condensing L-serine and activated acyl-CoA (most commonly palmitoyl-CoA) to form long-chain bases. The SPT complex is also composed of SPTLC2 or SPTLC3 and SPTSSA or SPTSSB. Within this complex, the heterodimer with SPTLC2 or SPTLC3 forms the catalytic core. The composition of the serine palmitoyltransferase (SPT) complex determines the substrate preference. The SPTLC1-SPTLC2-SPTSSA complex shows a strong preference for C16-CoA substrate, while the SPTLC1-SPTLC3-SPTSSA isozyme uses both C14-CoA and C16-CoA as substrates, with a slight preference for C14-CoA. The SPTLC1-SPTLC2-SPTSSB complex shows a strong preference for C18-CoA substrate, while the SPTLC1-SPTLC3-SPTSSB isozyme displays an ability to use a broader range of acyl-CoAs, without apparent preference. Required for adipocyte cell viability and metabolic homeostasis. This Cricetulus griseus (Chinese hamster) protein is Serine palmitoyltransferase 1 (SPTLC1).